Consider the following 578-residue polypeptide: Frizzled and smoothened-like protein Q (578 aa).

An N-terminal signal peptide occupies residues 1–23 (MKNSFLINILIIYYLFIILFVNS). At 24–233 (QDLKLGGSCE…GKTKILDRTN (210 aa)) the chain is on the extracellular side. An FZ domain is found at 27-157 (KLGGSCELID…GAPMFPINST (131 aa)). Intrachain disulfides connect Cys-32/Cys-95, Cys-41/Cys-88, Cys-79/Cys-128, and Cys-121/Cys-141. N-linked (GlcNAc...) asparagine glycosylation is found at Asn-46, Asn-64, Asn-99, and Asn-104. 4 N-linked (GlcNAc...) asparagine glycosylation sites follow: Asn-144, Asn-155, Asn-181, and Asn-233. Residues 234–254 (YTLTSISFITCIFMILTFGVL) form a helical membrane-spanning segment. The Cytoplasmic portion of the chain corresponds to 255-261 (PNKITHR). Residues 262 to 282 (MESILSFACGGCITALSLFIQ) form a helical membrane-spanning segment. The Extracellular segment spans residues 283–305 (SRQDNFNCSSDPGRFKSQSDYLC). Asn-289 carries an N-linked (GlcNAc...) asparagine glycan. Residues 306 to 326 (LLTGLIFQFGAITSIFWSPMI) form a helical membrane-spanning segment. The Cytoplasmic segment spans residues 327-341 (AYDFYITSTLGKIRK). Residues 342-362 (FGLYRIVLWSFIFVLTALPAF) form a helical membrane-spanning segment. Residues 363–388 (GGKYSATVATNCWINSDDGSAWQYVS) are Extracellular-facing. The chain crosses the membrane as a helical span at residues 389–409 (FYIPSWCAMGLICLFSILSVI). Topologically, residues 410-422 (NVSKMYIQTPNNR) are cytoplasmic. The chain crosses the membrane as a helical span at residues 423–443 (ILFFNIKILITLLLFLFVLTF). Topologically, residues 444 to 490 (ASSLKFYMEERMDTYFDAIAVWVECIGKGDPSQCELHAPGYDLKALN) are extracellular. The chain crosses the membrane as a helical span at residues 491-511 (IVVIGILGFTVFIGYGLDPIV). Residues 512-578 (IHIWMESKKF…LKSTEINQQP (67 aa)) lie on the Cytoplasmic side of the membrane. Low complexity predominate over residues 544–556 (NNNNNETASTSSG). Residues 544–578 (NNNNNETASTSSGNERKQTTVKMSNLKSTEINQQP) are disordered. The segment covering 563–578 (TVKMSNLKSTEINQQP) has biased composition (polar residues).

This sequence belongs to the G-protein coupled receptor Fz/Smo family.

It localises to the membrane. In Dictyostelium discoideum (Social amoeba), this protein is Frizzled and smoothened-like protein Q (fslQ).